The primary structure comprises 294 residues: Glucosamine kinase GspK (294 aa).

Residue Thr12 participates in ATP binding. Asp101 provides a ligand contact to substrate. Residue Thr122 participates in ATP binding. Substrate contacts are provided by residues 139-141 (GRE) and Asp146. Gly202 is an ATP binding site.

This sequence belongs to the eukaryotic-type N-acetylglucosamine kinase family.

Its subcellular location is the cytoplasm. It catalyses the reaction D-glucosamine + ATP = D-glucosamine 6-phosphate + ADP + H(+). Functionally, ATP-dependent kinase, which is specific for glucosamine. Does not show kinase activity with any other sugar. This Vibrio cholerae serotype O1 (strain ATCC 39315 / El Tor Inaba N16961) protein is Glucosamine kinase GspK (gspK).